A 440-amino-acid polypeptide reads, in one-letter code: 5-hydroxytryptamine receptor 6 (440 aa).

The Extracellular portion of the chain corresponds to 1 to 27 (MVPEPGPSANSTPAWGAGPPSAPGGSG). Residues 28 to 52 (WVAAALCVVIALTAAANSLLIALIC) traverse the membrane as a helical segment. At 53 to 62 (TQPALRNTSN) the chain is on the cytoplasmic side. The chain crosses the membrane as a helical span at residues 63–88 (FFLVSLFTSDLMVGLVVMPPAMLNAL). Residues 89–96 (YGRWVLAR) lie on the Extracellular side of the membrane. Residues 97–122 (GLCLLWTAFDVMCCSASILNLCLISL) form a helical membrane-spanning segment. Cysteines 99 and 180 form a disulfide. Asp106 is a binding site for serotonin. The Cytoplasmic segment spans residues 123–142 (DRYLLILSPLRYKLRMTPPR). A helical membrane pass occupies residues 143–167 (ALALVLGAWSLAALASFLPLLLGWH). The Extracellular portion of the chain corresponds to 168–185 (ELGHARPPVPGQCRLLAS). Residues 186–209 (LPFVLVASGLTFFLPSGAICFTYC) traverse the membrane as a helical segment. At 210-266 (RILLAARKQAVQVASLTTGMASQASETLQVPRTPRPGVESADSRRLATKHSRKALKA) the chain is on the cytoplasmic side. The helical transmembrane segment at 267–293 (SLTLGILLGMFFVTWLPFFVANIVQAV) threads the bilayer. Asn288 provides a ligand contact to serotonin. Residues 294-299 (CDCISP) are Extracellular-facing. Residues 300 to 323 (GLFDVLTWLGYCNSTMNPIIYPLF) form a helical membrane-spanning segment. The Cytoplasmic portion of the chain corresponds to 324 to 440 (MRDFKRALGR…RPHPLGIPTN (117 aa)). Positions 346 to 392 (ASLASPSLRTSHSGPRPGLSLQQVLPLPLPPDSDSDSDAGSGGSSGL) are disordered. The segment covering 347-358 (SLASPSLRTSHS) has biased composition (polar residues). Residues 362–371 (PGLSLQQVLP) are compositionally biased toward low complexity.

It belongs to the G-protein coupled receptor 1 family. In terms of assembly, interacts with MTOR, RPTOR and NF1. Interacts with CDK5.

The protein resides in the cell membrane. In terms of biological role, G-protein coupled receptor for 5-hydroxytryptamine (serotonin), a biogenic hormone that functions as a neurotransmitter, a hormone and a mitogen. Also has a high affinity for tricyclic psychotropic drugs. Ligand binding causes a conformation change that triggers signaling via guanine nucleotide-binding proteins (G proteins) and modulates the activity of downstream effectors. HTR6 is coupled to G(s) G alpha proteins and mediates activation of adenylate cyclase activity. Controls pyramidal neurons migration during corticogenesis, through the regulation of CDK5 activity. Is an activator of mTOR signaling. This chain is 5-hydroxytryptamine receptor 6 (HTR6), found in Pan troglodytes (Chimpanzee).